Reading from the N-terminus, the 310-residue chain is Serine protease 30 (310 aa).

The N-terminal stretch at 1 to 21 (MESRARCIFLLLLQILTRARG) is a signal peptide. Residues 22–36 (DILPSVCGHSRDAGK) constitute a propeptide, activation peptide. Positions 37-277 (IVGGQDALEG…YVDWIQRILA (241 aa)) constitute a Peptidase S1 domain. Residues cysteine 63 and cysteine 79 are joined by a disulfide bond. Catalysis depends on charge relay system residues histidine 78 and aspartate 128. Intrachain disulfides connect cysteine 161–cysteine 235, cysteine 191–cysteine 214, and cysteine 225–cysteine 253. The active-site Charge relay system is serine 229. Asparagine 238 and asparagine 279 each carry an N-linked (GlcNAc...) asparagine glycan. Serine 281 carries the GPI-anchor amidated serine lipid modification. A propeptide spans 282 to 310 (DAYGYHSSASAAYQMLLPVLLAVALPGSL) (removed in mature form).

This sequence belongs to the peptidase S1 family. As to expression, expressed primarily in distal gut.

The protein localises to the cell membrane. With respect to regulation, inhibited by aprotinin, leupeptin, benzamidine and soybean trypsin inhibitor. Partially inhibited by PMSF and DFP. In terms of biological role, selectively cleaves synthetic peptide substrates of trypsin. Activates the epithelial sodium channel ENaC. The chain is Serine protease 30 (Prss30) from Mus musculus (Mouse).